Consider the following 624-residue polypeptide: Chaperone protein HtpG (624 aa).

The segment at 1-336 (MKGQETRGFQ…SNDLPLNVSR (336 aa)) is a; substrate-binding. Positions 337-552 (EILQDSTVTR…ADEMSTQMAK (216 aa)) are b. The interval 553 to 624 (LFAAAGQSVP…IRRMNQLLVS (72 aa)) is c.

This sequence belongs to the heat shock protein 90 family. In terms of assembly, homodimer.

The protein resides in the cytoplasm. Functionally, molecular chaperone. Has ATPase activity. The polypeptide is Chaperone protein HtpG (Salmonella paratyphi A (strain ATCC 9150 / SARB42)).